The following is a 224-amino-acid chain: Putative O-methyltransferase MMAR_4217 (224 aa).

Residues 1 to 11 (MHGTDSSSDTP) are compositionally biased toward polar residues. The disordered stretch occupies residues 1–20 (MHGTDSSSDTPGQPAPSRAE). S-adenosyl-L-methionine-binding positions include valine 51, glutamate 73, 75 to 76 (GT), serine 81, aspartate 99, and isoleucine 100. Aspartate 147 contributes to the substrate binding site. Aspartate 149 is a binding site for S-adenosyl-L-methionine.

This sequence belongs to the class I-like SAM-binding methyltransferase superfamily. Cation-dependent O-methyltransferase family.

The polypeptide is Putative O-methyltransferase MMAR_4217 (Mycobacterium marinum (strain ATCC BAA-535 / M)).